We begin with the raw amino-acid sequence, 288 residues long: Homoserine kinase (288 aa).

78–88 serves as a coordination point for ATP; it reads PLARGLGSSSS.

The protein belongs to the GHMP kinase family. Homoserine kinase subfamily.

The protein resides in the cytoplasm. The enzyme catalyses L-homoserine + ATP = O-phospho-L-homoserine + ADP + H(+). The protein operates within amino-acid biosynthesis; L-threonine biosynthesis; L-threonine from L-aspartate: step 4/5. Its function is as follows. Catalyzes the ATP-dependent phosphorylation of L-homoserine to L-homoserine phosphate. The chain is Homoserine kinase from Streptococcus agalactiae serotype III (strain NEM316).